A 360-amino-acid chain; its full sequence is UDP-N-acetylglucosamine--N-acetylmuramyl-(pentapeptide) pyrophosphoryl-undecaprenol N-acetylglucosamine transferase (360 aa).

Residues serine 198 and glutamine 289 each coordinate UDP-N-acetyl-alpha-D-glucosamine.

This sequence belongs to the glycosyltransferase 28 family. MurG subfamily.

It localises to the cell membrane. The enzyme catalyses Mur2Ac(oyl-L-Ala-gamma-D-Glu-L-Lys-D-Ala-D-Ala)-di-trans,octa-cis-undecaprenyl diphosphate + UDP-N-acetyl-alpha-D-glucosamine = beta-D-GlcNAc-(1-&gt;4)-Mur2Ac(oyl-L-Ala-gamma-D-Glu-L-Lys-D-Ala-D-Ala)-di-trans,octa-cis-undecaprenyl diphosphate + UDP + H(+). The protein operates within cell wall biogenesis; peptidoglycan biosynthesis. Its function is as follows. Cell wall formation. Catalyzes the transfer of a GlcNAc subunit on undecaprenyl-pyrophosphoryl-MurNAc-pentapeptide (lipid intermediate I) to form undecaprenyl-pyrophosphoryl-MurNAc-(pentapeptide)GlcNAc (lipid intermediate II). This chain is UDP-N-acetylglucosamine--N-acetylmuramyl-(pentapeptide) pyrophosphoryl-undecaprenol N-acetylglucosamine transferase, found in Streptococcus pyogenes serotype M5 (strain Manfredo).